The following is a 141-amino-acid chain: Large ribosomal subunit protein uL11 (141 aa).

This sequence belongs to the universal ribosomal protein uL11 family. Part of the ribosomal stalk of the 50S ribosomal subunit. Interacts with L10 and the large rRNA to form the base of the stalk. L10 forms an elongated spine to which L12 dimers bind in a sequential fashion forming a multimeric L10(L12)X complex. One or more lysine residues are methylated.

Functionally, forms part of the ribosomal stalk which helps the ribosome interact with GTP-bound translation factors. The polypeptide is Large ribosomal subunit protein uL11 (Synechococcus sp. (strain RCC307)).